Reading from the N-terminus, the 1031-residue chain is Caprin-2 (1031 aa).

Disordered stretches follow at residues 1–27 (MKSA…QSTL), 364–458 (LQEE…SWEN), 500–520 (PKDV…LPKD), 605–658 (DQAS…SSEA), and 830–876 (RSGT…SMTP). Polar residues-rich tracts occupy residues 425–439 (VSVQ…SWTT) and 446–458 (ASVQ…SWEN). Residues 608 to 646 (SSGSETEFTTSETPEMVVSPCKPKPASALASPNPPLSKS) show a composition bias toward low complexity. Over residues 830–853 (RSGTSSGLQANSRAGWSDSSQVSS) the composition is skewed to polar residues. 2 positions are modified to phosphoserine: serine 852 and serine 853. Residues 897–1031 (PQQMRVAFSA…TFSGYLLYQD (135 aa)) form the C1q domain. Ca(2+)-binding residues include aspartate 982 and glutamate 988.

This sequence belongs to the caprin family. In terms of assembly, homotrimer; via C1q domain. Found in a complex with LRP6, CCNY and CDK14 during G2/M stage; CAPRIN2 functions as a scaffold for the complex by binding to CCNY via its N terminus and to CDK14 via its C terminus. Interacts with LRP5. Interacts with LRP6. Specifically expressed in brain (at protein level).

The protein resides in the cytoplasm. The protein localises to the cell membrane. In terms of biological role, promotes phosphorylation of the Wnt coreceptor LRP6, leading to increased activity of the canonical Wnt signaling pathway. Facilitates constitutive LRP6 phosphorylation by CDK14/CCNY during G2/M stage of the cell cycle, which may potentiate cells for Wnt signaling. May regulate the transport and translation of mRNAs, modulating for instance the expression of proteins involved in synaptic plasticity in neurons. Involved in regulation of growth as erythroblasts shift from a highly proliferative state towards their terminal phase of differentiation. May be involved in apoptosis. This is Caprin-2 from Mus musculus (Mouse).